A 525-amino-acid chain; its full sequence is uncharacterized protein (525 aa).

A run of 2 helical transmembrane segments spans residues 28-48 and 353-373; these read FIDVHVANISVAAFLTPNLII and GVNALLAAIGAEIGANILFTP. One can recognise a Pterin-binding domain in the interval 146–394; sequence DIKIGKLKVG…ELKIASKMMF (249 aa).

The protein resides in the cell membrane. Functionally, unknown. Does not possess dihydropteroate synthase (DHPS) activity since it does not catalyze the condensation of 6-hydroxymethyl-7,8-dihydropterin pyrophosphate (DHPP) and 4-aminobenzoate to form 7,8-dihydropteroate. This is an uncharacterized protein from Methanocaldococcus jannaschii (strain ATCC 43067 / DSM 2661 / JAL-1 / JCM 10045 / NBRC 100440) (Methanococcus jannaschii).